The primary structure comprises 344 residues: DNA integrity scanning protein DisA (344 aa).

The 133-residue stretch at 1 to 133 (MALLAPGTPI…GRRYLIERPE (133 aa)) folds into the DAC domain. Residues glycine 61 and 92 to 96 (TRHRT) contribute to the ATP site.

Belongs to the DisA family. Homooctamer. Mg(2+) serves as cofactor.

It carries out the reaction 2 ATP = 3',3'-c-di-AMP + 2 diphosphate. In terms of biological role, participates in a DNA-damage check-point. DisA forms globular foci that rapidly scan along the chromosomes searching for lesions. Also has diadenylate cyclase activity, catalyzing the condensation of 2 ATP molecules into cyclic di-AMP (c-di-AMP). c-di-AMP likely acts as a signaling molecule that may couple DNA integrity with a cellular process. The chain is DNA integrity scanning protein DisA from Cutibacterium acnes (strain DSM 16379 / KPA171202) (Propionibacterium acnes).